We begin with the raw amino-acid sequence, 172 residues long: uncharacterized protein (172 aa).

Belongs to the archaeal NMN adenylyltransferase family.

This is an uncharacterized protein from Aeropyrum pernix (strain ATCC 700893 / DSM 11879 / JCM 9820 / NBRC 100138 / K1).